The sequence spans 332 residues: Processive diacylglycerol alpha-glucosyltransferase (332 aa).

It belongs to the glycosyltransferase group 1 family. Glycosyltransferase 4 subfamily. Mg(2+) serves as cofactor.

Its subcellular location is the cell membrane. The catalysed reaction is a 1,2-diacyl-sn-glycerol + UDP-alpha-D-glucose = a 1,2-diacyl-3-O-(alpha-D-glucopyranosyl)-sn-glycerol + UDP + H(+). It catalyses the reaction a 1,2-diacyl-3-O-(alpha-D-glucopyranosyl)-sn-glycerol + UDP-alpha-D-glucose = a 1,2-diacyl-3-O-[alpha-D-glucosyl-(1-&gt; 2)-alpha-D-glucosyl]-sn-glycerol + UDP + H(+). It participates in glycolipid metabolism; diglucosyl-diacylglycerol biosynthesis. With respect to regulation, activated by the negatively charged lipids phosphatidylglycerol (PG), cardiolipin (CL), nonbilayer-prone 1,3-DAG, 1,2-dioleoylphosphatidylglycerol (DOPG) and 1,2-dioleoylphosphatidylserine (DOPS). Inhibited by 1,2-diacyl-3-O-(alpha-D-galactopyranosyl)-sn-glycerol, 1,2-diacyl-3-O-[6-O-acyl(alpha-D-glucopyranosyl)]-sn-glycerol and 1,2-diacyl-3-O-[alpha-D-glucopyranosyl-(1-&gt;2)-O-(6-O-acyl-alpha-D-glucopyranosyl)]-sn-glycerol. Functionally, processive glucosyltransferase involved in the biosynthesis of both the non-bilayer-prone alpha-monoglucosyldiacylglycerol and the bilayer-forming membrane lipid alpha-diglucosyldiacylglycerol. These are major components for maintaining the anionic lipid surface charge density, for balancing the bilayer to non-bilayer phase equilibria and for keeping a constant lipid bilayer spontaneous curvature (curvature packing stress). Catalyzes the transfer of a glucosyl residue from UDP-Glc to diacylglycerol (DAG) acceptor to form the corresponding alpha-glucosyl-DAG (1,2-diacyl-3-O-(alpha-D-glucopyranosyl)-sn-glycerol), which then acts as acceptor to give alpha-diglucosyl-DAG product (3-O-(alpha-D-glucopyranosyl-alpha-(1-&gt;2)-D-glucopyranosyl)-1,2-diacyl-sn-glycerol). It can only use UDP-Glc as sugar donor. This Acholeplasma laidlawii protein is Processive diacylglycerol alpha-glucosyltransferase (dgs).